Reading from the N-terminus, the 333-residue chain is Acetyltransferase Pat (333 aa).

3',5'-cyclic AMP-binding positions include 85-88 (GEIA), 95-96 (RT), and R135. An N-acetyltransferase domain is found at 153–317 (FYLRPVLPGD…DTVPFEPELI (165 aa)). E211 contacts Mg(2+). Residues 237-239 (FTV), 245-250 (GRGIGS), N276, and R285 contribute to the substrate site.

Homodimer. The cofactor is Mg(2+).

Allosterically regulated by cAMP. Catalyzes specifically the acetylation of the epsilon-amino group of a highly conserved lysine residue in acetyl-CoA synthetase (ACS) and of the universal stress protein (USP) MSMEG_4207. Acetylation results in the inactivation of ACS activity and could be important for mycobacteria to adjust to environmental changes. This Mycolicibacterium smegmatis (strain ATCC 700084 / mc(2)155) (Mycobacterium smegmatis) protein is Acetyltransferase Pat.